The chain runs to 384 residues: Carbamoyl phosphate synthase small chain (384 aa).

The CPSase stretch occupies residues 1–192 (MPIAAAKPAL…FGPVAEQQGQ (192 aa)). Ser-51, Gly-244, and Gly-246 together coordinate L-glutamine. Residues 196–381 (TVVALDFGVK…VKLMRQQKAE (186 aa)) form the Glutamine amidotransferase type-1 domain. Cys-272 (nucleophile) is an active-site residue. L-glutamine-binding residues include Met-273, Gln-276, Asn-312, Gly-314, and Phe-315. Active-site residues include His-354 and Glu-356.

The protein belongs to the CarA family. In terms of assembly, composed of two chains; the small (or glutamine) chain promotes the hydrolysis of glutamine to ammonia, which is used by the large (or ammonia) chain to synthesize carbamoyl phosphate. Tetramer of heterodimers (alpha,beta)4.

It catalyses the reaction hydrogencarbonate + L-glutamine + 2 ATP + H2O = carbamoyl phosphate + L-glutamate + 2 ADP + phosphate + 2 H(+). The catalysed reaction is L-glutamine + H2O = L-glutamate + NH4(+). Its pathway is amino-acid biosynthesis; L-arginine biosynthesis; carbamoyl phosphate from bicarbonate: step 1/1. It functions in the pathway pyrimidine metabolism; UMP biosynthesis via de novo pathway; (S)-dihydroorotate from bicarbonate: step 1/3. Small subunit of the glutamine-dependent carbamoyl phosphate synthetase (CPSase). CPSase catalyzes the formation of carbamoyl phosphate from the ammonia moiety of glutamine, carbonate, and phosphate donated by ATP, constituting the first step of 2 biosynthetic pathways, one leading to arginine and/or urea and the other to pyrimidine nucleotides. The small subunit (glutamine amidotransferase) binds and cleaves glutamine to supply the large subunit with the substrate ammonia. The polypeptide is Carbamoyl phosphate synthase small chain (Synechocystis sp. (strain ATCC 27184 / PCC 6803 / Kazusa)).